The sequence spans 313 residues: NADH-ubiquinone oxidoreductase chain 2 (313 aa).

A run of 10 helical transmembrane segments spans residues 3–23 (IWII…FIFW), 47–67 (SMIT…ISSF), 81–101 (INIS…LIMI), 105–125 (LTFY…LLII), 128–148 (FMNS…SIMA), 153–173 (LIKQ…LCLI), 177–197 (MNFW…IIIN), 220–240 (NTMI…GFFM), 253–275 (LIFM…RILT), and 293–313 (KSNF…NIFF).

This sequence belongs to the complex I subunit 2 family.

It is found in the mitochondrion inner membrane. The catalysed reaction is a ubiquinone + NADH + 5 H(+)(in) = a ubiquinol + NAD(+) + 4 H(+)(out). Core subunit of the mitochondrial membrane respiratory chain NADH dehydrogenase (Complex I) that is believed to belong to the minimal assembly required for catalysis. Complex I functions in the transfer of electrons from NADH to the respiratory chain. The immediate electron acceptor for the enzyme is believed to be ubiquinone. In Rhipicephalus sanguineus (Brown dog tick), this protein is NADH-ubiquinone oxidoreductase chain 2 (ND2).